We begin with the raw amino-acid sequence, 478 residues long: MVTTTAKNVGYITQIIGPVVDAEFPEGDLPAIYNALLIEGKTDSGLDIRLTCEVQQLLGDKKVRAVSMSTTDGMVRGMKAIDTGAPITVPVGKSTLGRIFNVLGEPIDELGPVEIVDKFSIHRSAPKFTDLVTQPEIFETGIKVIDLLAPYRKGGKIGLFGGAGVGKTVLIQELIHNIAKEHSGVSVFGGVGERTREGNDLYNEFKESNVLGQVALVYGQMNEPPGARMRVGLTALTMAEYFRDVSKQDVLLFIDNIFRFVQAGSEVSALLGRMPSAVGYQPTLGTEMGDLQERITSTNEGSITSVQAVYVPADDLTDPAPATTFAHLDATTVLSRQLASLGIYPAVDPLSSTSTMLQPAVVGEEHYNIARGVQSTLQRYKDLQDIIAILGLDELSPEDKLVVNRARKLQRFLSQPFHVAEIFTGSPGKYVSLDKTIAGFKRVLQGEFDDLPEQAFYLVGDLDEALEKAKKLKDEGKS.

Position 161–168 (161–168) interacts with ATP; sequence GGAGVGKT.

It belongs to the ATPase alpha/beta chains family. F-type ATPases have 2 components, CF(1) - the catalytic core - and CF(0) - the membrane proton channel. CF(1) has five subunits: alpha(3), beta(3), gamma(1), delta(1), epsilon(1). CF(0) has four main subunits: a(1), b(1), b'(1) and c(9-12).

It localises to the cell inner membrane. It carries out the reaction ATP + H2O + 4 H(+)(in) = ADP + phosphate + 5 H(+)(out). In terms of biological role, produces ATP from ADP in the presence of a proton gradient across the membrane. The catalytic sites are hosted primarily by the beta subunits. In Gloeobacter violaceus (strain ATCC 29082 / PCC 7421), this protein is ATP synthase subunit beta.